Here is a 359-residue protein sequence, read N- to C-terminus: 3-dehydroquinate synthase (359 aa).

NAD(+)-binding positions include 71–76, 105–109, 129–130, Lys-142, and Lys-151; these read DGEAYK, GVVGD, and TT. Residues Glu-184, His-247, and His-264 each coordinate Zn(2+).

Belongs to the sugar phosphate cyclases superfamily. Dehydroquinate synthase family. Requires Co(2+) as cofactor. Zn(2+) is required as a cofactor. It depends on NAD(+) as a cofactor.

It is found in the cytoplasm. It catalyses the reaction 7-phospho-2-dehydro-3-deoxy-D-arabino-heptonate = 3-dehydroquinate + phosphate. It participates in metabolic intermediate biosynthesis; chorismate biosynthesis; chorismate from D-erythrose 4-phosphate and phosphoenolpyruvate: step 2/7. Catalyzes the conversion of 3-deoxy-D-arabino-heptulosonate 7-phosphate (DAHP) to dehydroquinate (DHQ). In Burkholderia orbicola (strain MC0-3), this protein is 3-dehydroquinate synthase.